The primary structure comprises 140 residues: Large ribosomal subunit protein bL17 (140 aa).

This sequence belongs to the bacterial ribosomal protein bL17 family. Part of the 50S ribosomal subunit. Contacts protein L32.

The protein is Large ribosomal subunit protein bL17 of Paramagnetospirillum magneticum (strain ATCC 700264 / AMB-1) (Magnetospirillum magneticum).